Consider the following 1308-residue polypeptide: Misshapen-like kinase 1 (1308 aa).

The Protein kinase domain occupies 25–289 (FELVEVVGNG…TEQLLKFPFI (265 aa)). ATP contacts are provided by residues 31 to 39 (VGNGTYGQV) and lysine 54. The active-site Proton acceptor is the aspartate 153. Disordered regions lie at residues 299–347 (RIQL…NVPG), 363–383 (KSNS…QRDP), and 395–862 (QRRI…GGTM). The segment covering 317–333 (EETEYEYSGSEEEDDSH) has biased composition (acidic residues). 2 positions are modified to phosphoserine: serine 324 and serine 326. The segment covering 371 to 380 (QQQQLQQQQQ) has biased composition (low complexity). Residues 396–466 (RRIEEQKEER…EEQRQSERLQ (71 aa)) are compositionally biased toward basic and acidic residues. Residues 479–497 (LQQQQQQQQLQKQQQQQQQ) show a composition bias toward low complexity. Omega-N-methylarginine occurs at positions 503 and 511. The segment covering 520–530 (AWAREVEERAR) has biased composition (basic and acidic residues). Residues 600 to 610 (RSQSLQDQPTR) are compositionally biased toward polar residues. Positions 623-633 (PAAVPTPTATP) are enriched in low complexity. At serine 644 the chain carries Phosphoserine. Residues 673–685 (QRTSSIATALNTS) are compositionally biased toward polar residues. 6 positions are modified to phosphoserine: aspartate 702, serine 720, serine 729, serine 745, serine 746, and serine 750. Over residues 702–714 (DLRRSDPGWERSD) the composition is skewed to basic and acidic residues. The span at 773-797 (AIGEDFVLLKERTLDEAPKPPKKAM) shows a compositional bias: basic and acidic residues. Residues 804–820 (EEVESSEEEEEEGDGEP) are compositionally biased toward acidic residues. The interval 842-1308 (MVVHDVEEIS…TLNRNCIMNW (467 aa)) is mediates interaction with RAP2A. Residue threonine 867 is modified to Phosphothreonine. A disordered region spans residues 881-918 (GYTNLPDVVQPSHSPTENSKGQSPPTKDGGSDYQSRGL). Polar residues predominate over residues 891 to 905 (PSHSPTENSKGQSPP). The CNH domain occupies 995–1282 (NSEILCAALW…KFLCERNDKV (288 aa)).

It belongs to the protein kinase superfamily. STE Ser/Thr protein kinase family. STE20 subfamily. Interacts with RAP2A and TANC1. Interacts with NCK1. Mg(2+) is required as a cofactor. In terms of processing, autophosphorylated. In terms of tissue distribution, appears to be ubiquitous, expressed in all tissue types examined. Highly expressed in the brain, moderately expressed in kidney and spleen, low levels present in heart and skeletal muscle. Isoform 2 is more abundant in the brain than isoform 1.

It is found in the cytoplasm. It localises to the postsynaptic density. The protein localises to the cell projection. Its subcellular location is the axon. The protein resides in the dendrite. It catalyses the reaction L-seryl-[protein] + ATP = O-phospho-L-seryl-[protein] + ADP + H(+). The catalysed reaction is L-threonyl-[protein] + ATP = O-phospho-L-threonyl-[protein] + ADP + H(+). Serine/threonine kinase which acts as a negative regulator of Ras-related Rap2-mediated signal transduction to control neuronal structure and AMPA receptor trafficking. Required for normal synaptic density, dendrite complexity, as well as surface AMPA receptor expression in hippocampal neurons. Can activate the JNK and MAPK14/p38 pathways and mediates stimulation of the stress-activated protein kinase MAPK14/p38 MAPK downstream of the Raf/ERK pathway. Phosphorylates TANC1 upon stimulation by RAP2A, MBP and SMAD1. Has an essential function in negative selection of thymocytes, perhaps by coupling NCK1 to activation of JNK1. Activator of the Hippo signaling pathway which plays a pivotal role in organ size control and tumor suppression by restricting proliferation and promoting apoptosis. MAP4Ks act in parallel to and are partially redundant with STK3/MST2 and STK4/MST2 in the phosphorylation and activation of LATS1/2, and establish MAP4Ks as components of the expanded Hippo pathway. This chain is Misshapen-like kinase 1, found in Mus musculus (Mouse).